We begin with the raw amino-acid sequence, 389 residues long: Putative glutamate--cysteine ligase 2 (389 aa).

The protein belongs to the glutamate--cysteine ligase type 2 family. YbdK subfamily.

The enzyme catalyses L-cysteine + L-glutamate + ATP = gamma-L-glutamyl-L-cysteine + ADP + phosphate + H(+). In terms of biological role, ATP-dependent carboxylate-amine ligase which exhibits weak glutamate--cysteine ligase activity. This Rhodospirillum rubrum (strain ATCC 11170 / ATH 1.1.1 / DSM 467 / LMG 4362 / NCIMB 8255 / S1) protein is Putative glutamate--cysteine ligase 2.